Consider the following 1009-residue polypeptide: Chitin synthase 2 (1009 aa).

2 stretches are compositionally biased toward polar residues: residues 1–12 (MSYNNPNNSNSH) and 34–62 (EFLN…LNFQ). 2 disordered regions span residues 1 to 62 (MSYN…LNFQ) and 175 to 234 (DESQ…EVRS). Residues 192-202 (EGEEEEEEGET) show a composition bias toward acidic residues. The next 7 helical transmembrane spans lie at 647 to 667 (WLNG…KVWT), 682 to 702 (FFYQ…YFLV), 722 to 742 (ILSV…FVLS), 757 to 777 (IVIF…FMAV), 804 to 823 (LVVA…FLYF), 930 to 950 (VLVW…TGGF), and 967 to 987 (AAVF…FRFI).

Belongs to the chitin synthase family.

Its subcellular location is the cell membrane. It catalyses the reaction [(1-&gt;4)-N-acetyl-beta-D-glucosaminyl](n) + UDP-N-acetyl-alpha-D-glucosamine = [(1-&gt;4)-N-acetyl-beta-D-glucosaminyl](n+1) + UDP + H(+). Its function is as follows. Polymerizes chitin, a structural polymer of the cell wall and septum, by transferring the sugar moiety of UDP-GlcNAc to the non-reducing end of the growing chitin polymer. The sequence is that of Chitin synthase 2 (CHS2) from Candida albicans (Yeast).